We begin with the raw amino-acid sequence, 341 residues long: GDP-mannose transporter GONST5 (341 aa).

Helical transmembrane passes span 17–37 (LSILQWWGFNVTVIIMNKWIF), 44–64 (FPLSVSCVHFICSSIGAYIVI), 89–109 (FVFCINIVLGNISLRYIPVSF), 141–161 (LVPIVGGILLTSITELSFNVF), 192–212 (INTVYYMAPFATMILGLPAFL), 233–253 (IILFNSGVLAFCLNFSIFYVI), 260–280 (TFNVAGNLKVAVAVFVSWMIF), and 284–304 (ISPMNAVGCGITLVGCTFYGY). The 120-residue stretch at 33–152 (NKWIFQKLDF…PIVGGILLTS (120 aa)) folds into the EamA domain.

Belongs to the TPT transporter family. TPT (TC 2.A.7.9) subfamily. In terms of tissue distribution, expressed in rosette leaves, flowers and siliques.

It is found in the golgi apparatus membrane. Its function is as follows. GDP-mannose transporter that may be involved in the import of GDP-mannose from the cytoplasm into the Golgi lumen. This Arabidopsis thaliana (Mouse-ear cress) protein is GDP-mannose transporter GONST5 (GONST5).